Reading from the N-terminus, the 429-residue chain is Nocturnin (429 aa).

Residues 1-73 constitute a mitochondrion transit peptide; that stretch reads MYQSPRRLCS…SMGNGTSRLY (73 aa). The disordered stretch occupies residues 21–68; sequence RRTLVPGPRRTLAPPVLGSRPKSPQLQAAAASGAARSRPRTVSSMGNG. Glutamate 193 contacts Mg(2+). Residues glutamate 193, 217 to 219, asparagine 261, 284 to 287, and 322 to 324 contribute to the substrate site; these read KPW, HLKA, and DFN. An interaction with PPARG region spans residues 341–351; that stretch reads NLNSAYKLLSP. Residue histidine 412 participates in substrate binding.

Belongs to the CCR4/nocturin family. As to quaternary structure, interacts with PPARG. Mg(2+) is required as a cofactor. As to expression, highly expressed in the differentiated adipocyte (at protein level). Ubiquitous.

It localises to the cytoplasm. The protein resides in the nucleus. The protein localises to the perinuclear region. It is found in the mitochondrion. The catalysed reaction is NADP(+) + H2O = phosphate + NAD(+). It catalyses the reaction NADPH + H2O = phosphate + NADH. Its function is as follows. Phosphatase which catalyzes the conversion of NADP(+) to NAD(+) and of NADPH to NADH. Shows a small preference for NADPH over NADP(+). Represses translation and promotes degradation of target mRNA molecules. Plays an important role in post-transcriptional regulation of metabolic genes under circadian control. Exerts a rhythmic post-transcriptional control of genes necessary for metabolic functions including nutrient absorption, glucose/insulin sensitivity, lipid metabolism, adipogenesis, inflammation and osteogenesis. Plays an important role in favoring adipogenesis over osteoblastogenesis and acts as a key regulator of the adipogenesis/osteogenesis balance. Promotes adipogenesis by facilitating PPARG nuclear translocation which activates its transcriptional activity. Regulates circadian expression of NOS2 in the liver and negatively regulates the circadian expression of IGF1 in the bone. Critical for proper development of early embryos. The polypeptide is Nocturnin (Mus musculus (Mouse)).